The primary structure comprises 545 residues: Chaperonin GroEL (545 aa).

ATP contacts are provided by residues 30–33 (TLGP), Lys51, 87–91 (DGTTT), Gly415, 479–481 (NAA), and Asp495. Positions 526-545 (KEDKPDLGNAGAGGNMGGMM) are disordered. The segment covering 535-545 (AGAGGNMGGMM) has biased composition (gly residues).

This sequence belongs to the chaperonin (HSP60) family. In terms of assembly, forms a cylinder of 14 subunits composed of two heptameric rings stacked back-to-back. Interacts with the co-chaperonin GroES.

Its subcellular location is the cytoplasm. The enzyme catalyses ATP + H2O + a folded polypeptide = ADP + phosphate + an unfolded polypeptide.. Its function is as follows. Together with its co-chaperonin GroES, plays an essential role in assisting protein folding. The GroEL-GroES system forms a nano-cage that allows encapsulation of the non-native substrate proteins and provides a physical environment optimized to promote and accelerate protein folding. The protein is Chaperonin GroEL of Blochmanniella pennsylvanica (strain BPEN).